The chain runs to 439 residues: Membrane sensor protein UhpC (439 aa).

At 1-25 (MLPFLKAPADAPLMTDKYEIDARYR) the chain is on the cytoplasmic side. The helical transmembrane segment at 26 to 45 (YWRRHILLTIWLGYALFYFT) threads the bilayer. Over 46 to 66 (RKSFNAAVPEILANGVLSRSD) the chain is Periplasmic. The chain crosses the membrane as a helical span at residues 67-87 (IGLLATLFYITYGVSKFVSGI). The Cytoplasmic portion of the chain corresponds to 88 to 95 (VSDRSNAR). A helical membrane pass occupies residues 96-118 (YFMGIGLIATGIINILFGFSTSL). The Periplasmic segment spans residues 119 to 121 (WAF). Residues 122-144 (AVLWVLNAFFQGWGSPVCARLLT) traverse the membrane as a helical segment. The Cytoplasmic segment spans residues 145-162 (AWYSRTERGGWWALWNTA). Residues 163 to 183 (HNVGGALIPIVMAAAALHYGW) form a helical membrane-spanning segment. Position 184 (Arg-184) is a topological domain, periplasmic. Residues 185 to 205 (AGMMIAGCMAIVVGIFLCWRL) traverse the membrane as a helical segment. The Cytoplasmic portion of the chain corresponds to 206-244 (RDRPQALGLPAVGEWRHDALEIAQQQEGAGLTRKEILTK). A helical transmembrane segment spans residues 245–265 (YVLLNPYIWLLSFCYVLVYVV). Over 266–289 (RAAINDWGNLYMSETLGVDLVTAN) the chain is Periplasmic. The chain crosses the membrane as a helical span at residues 290–310 (TAVTMFELGGFIGALVAGWGS). Over 311-322 (DKLFNGNRGPMN) the chain is Cytoplasmic. Residues 323-343 (LIFAAGILLSVGSLWLMPFAS) form a helical membrane-spanning segment. Residues 344–349 (YVMQAT) lie on the Periplasmic side of the membrane. A helical transmembrane segment spans residues 350 to 370 (CFFTIGFFVFGPQMLIGMAAA). Over 371-379 (ECSHKEAAG) the chain is Cytoplasmic. The helical transmembrane segment at 380 to 400 (AATGFVGLFAYLGASLAGWPL) threads the bilayer. Residues 401 to 410 (AKVLDTWHWS) are Periplasmic-facing. Residues 411–431 (GFFVVISIAAGISALLLLPFL) traverse the membrane as a helical segment. The Cytoplasmic segment spans residues 432-439 (NAQTPREA).

The protein belongs to the major facilitator superfamily. Organophosphate:Pi antiporter (OPA) (TC 2.A.1.4) family.

The protein resides in the cell inner membrane. In terms of biological role, part of the UhpABC signaling cascade that controls the expression of the hexose phosphate transporter UhpT. UhpC senses external glucose-6-phosphate and interacts with the histidine kinase UhpB, leading to the stimulation of the autokinase activity of UhpB. The sequence is that of Membrane sensor protein UhpC from Escherichia coli (strain K12).